The following is a 515-amino-acid chain: MGLHFKWPLGAPMLAAIYAMSVVLKMLPALGMACPPKCRCEKLLFYCDSQGFHSVPNATDKGSLGLSLRHNHITALERDQFASFSQLTWLHLDHNQISTVKEDAFQGLYKLKELILSSNKIFYLPNTTFTQLINLQNLDLSFNQLSSLHPELFYGLRKLQTLHLRSNSLRTIPVRLFWDCRSLEFLDLSTNRLRSLARNGFAGLIKLRELHLEHNQLTKINFAHFLRLSSLHTLFLQWNKISNLTCGMDWTWSTLEKLDLTGNEIKAIDLTVFETMPNLKILLMDNNKLNSLDSKILNSLKSLTTVGLSGNLWECSPRVCALASWLGSFQGRWEHSILCHSPDHTQGEDILDAVHGFQLCWNLSTTVTAMATTYRDPTTEYTKISSSSYHVGDKEIPTTAGIAVTTEEHFPEPDNAIFTQRVITGTMALLFSFFFIIFIVFISRKCCPPTLRRIRQCSMIQNHRQLRSQTRLHMSNMSDQGPYNEYEPTHEGPFIIINGYGQCKCQQLPYKECEV.

The first 33 residues, 1 to 33 (MGLHFKWPLGAPMLAAIYAMSVVLKMLPALGMA), serve as a signal peptide directing secretion. The region spanning 34–61 (CPPKCRCEKLLFYCDSQGFHSVPNATDK) is the LRRNT domain. Residues 34-421 (CPPKCRCEKL…EPDNAIFTQR (388 aa)) are Extracellular-facing. An N-linked (GlcNAc...) asparagine glycan is attached at asparagine 57. 10 LRR repeats span residues 63-83 (SLGL…QFAS), 86-107 (QLTW…AFQG), 110-131 (KLKE…TFTQ), 134-155 (NLQN…LFYG), 158-179 (KLQT…LFWD), 182-203 (SLEF…GFAG), 206-227 (KLRE…HFLR), 230-251 (SLHT…MDWT), 254-275 (TLEK…VFET), and 278-299 (NLKI…ILNS). Asparagine 126 carries N-linked (GlcNAc...) asparagine glycosylation. Asparagine 243 is a glycosylation site (N-linked (GlcNAc...) asparagine). The LRRCT domain maps to 311–362 (NLWECSPRVCALASWLGSFQGRWEHSILCHSPDHTQGEDILDAVHGFQLCWN). An N-linked (GlcNAc...) asparagine glycan is attached at asparagine 362. The chain crosses the membrane as a helical span at residues 422-442 (VITGTMALLFSFFFIIFIVFI). At 443–515 (SRKCCPPTLR…QQLPYKECEV (73 aa)) the chain is on the cytoplasmic side. The Involved in DLG4-binding motif lies at 512–515 (ECEV).

The protein belongs to the LRRTM family. In terms of assembly, interacts with DLG4. Interacts with neurexin NRXN1; interaction is mediated by heparan sulfate glycan modification on neurexin. As to expression, expressed in neuronal tissues.

It localises to the cell membrane. The protein localises to the postsynaptic cell membrane. Involved in the development and maintenance of excitatory synapses in the vertebrate nervous system. Regulates surface expression of AMPA receptors and instructs the development of functional glutamate release sites. Acts as a ligand for the presynaptic receptors NRXN1-A and NRXN1-B. The polypeptide is Leucine-rich repeat transmembrane neuronal protein 2 (Lrrtm2) (Mus musculus (Mouse)).